The sequence spans 704 residues: Inhibitor of carbonic anhydrase (704 aa).

The first 19 residues, Met1–Ala19, serve as a signal peptide directing secretion. 2 consecutive Transferrin-like domains span residues Val25–Arg347 and Val357–Gln689. Cystine bridges form between Cys28-Cys67, Cys38-Cys58, Cys137-Cys213, Cys172-Cys188, Cys175-Cys196, Cys185-Cys198, Cys246-Cys260, Cys360-Cys392, Cys370-Cys383, Cys417-Cys699, Cys440-Cys662, Cys472-Cys549, Cys496-Cys690, Cys506-Cys520, Cys517-Cys532, and Cys589-Cys603. N-linked (GlcNAc...) asparagine glycosylation is present at Asn491.

It belongs to the transferrin family. In terms of assembly, monomer. Interacts (via transferrin-like domain 2) with CA2. In terms of processing, N-glycosylated. Blood plasma (at protein level).

The protein resides in the secreted. Functionally, inhibitor for carbonic anhydrase 2 (CA2). Does not bind iron ions. This chain is Inhibitor of carbonic anhydrase, found in Sus scrofa (Pig).